Consider the following 475-residue polypeptide: Tryptophan synthase beta chain 2, chloroplastic (475 aa).

The span at 1–21 (MATASTAATFRPSSVSASSEL) shows a compositional bias: polar residues. Positions 1 to 44 (MATASTAATFRPSSVSASSELTHLRSPSKLPKFTPLPSARSRSS) are disordered. Residues 1–51 (MATASTAATFRPSSVSASSELTHLRSPSKLPKFTPLPSARSRSSSSFSVSC) constitute a chloroplast transit peptide. Thr-52 is subject to N-acetylthreonine. Lys-170 carries the N6-(pyridoxal phosphate)lysine modification.

It belongs to the TrpB family. As to quaternary structure, tetramer of two alpha and two beta chains. Pyridoxal 5'-phosphate is required as a cofactor.

It is found in the plastid. The protein localises to the chloroplast. The catalysed reaction is (1S,2R)-1-C-(indol-3-yl)glycerol 3-phosphate + L-serine = D-glyceraldehyde 3-phosphate + L-tryptophan + H2O. It participates in amino-acid biosynthesis; L-tryptophan biosynthesis; L-tryptophan from chorismate: step 5/5. In terms of biological role, the beta subunit is responsible for the synthesis of L-tryptophan from indole and L-serine. The protein is Tryptophan synthase beta chain 2, chloroplastic (TSB2) of Arabidopsis thaliana (Mouse-ear cress).